A 655-amino-acid polypeptide reads, in one-letter code: Forkhead box protein O1 (655 aa).

Disordered regions lie at residues 1 to 63 and 116 to 158; these read MAEA…SASA and GCLH…SRRN. Thr24 carries the post-translational modification Phosphothreonine; by PKB/AKT1 or PKB/AKT2 and SGK1. A compositionally biased stretch (low complexity) spans 33–63; it reads SQSNSATSSPAPSGSAAANPDAAAGLPSASA. Residues 120–141 show a composition bias toward pro residues; sequence PAPPQPPPPGPLSQHPPVPPAA. The segment at residues 159 to 235 is a DNA-binding region (fork-head); it reads AWGNLSYADL…VQNEGTGKSS (77 aa). DNA-binding stretches follow at residues 211–218 and 234–237; these read NSIRHNLS and SSWW. Phosphoserine; by STK4/MST1 is present on residues Ser212, Ser218, Ser234, and Ser235. The segment at 234–344 is disordered; sequence SSWWMLNPEG…QDDLGEGDVH (111 aa). An N6-acetyllysine mark is found at Lys245 and Lys248. Ser249 bears the Phosphoserine; by CDK1 mark. 2 positions are modified to omega-N-methylarginine; by PRMT1: Arg251 and Arg253. The short motif at 251-253 is the Nuclear localization signal element; the sequence is RRR. Ser256 carries the post-translational modification Phosphoserine; by PKB/AKT1 and SGK1. 3 positions are modified to N6-acetyllysine: Lys262, Lys265, and Lys274. A compositionally biased stretch (basic residues) spans 264 to 275; the sequence is AKSRSRAAKKKA. The interval 283 to 563 is sufficient for interaction with NLK; the sequence is GAGDSPGSQF…RLTQVKTPVQ (281 aa). Phosphoserine is present on residues Ser287 and Ser298. Positions 309–326 are enriched in polar residues; that stretch reads NWSTFRPRTSSNASTISG. Ser319 is modified (phosphoserine; by PKB/AKT1). At Ser322 the chain carries Phosphoserine; by CK1 and SGK1. At Ser325 the chain carries Phosphoserine; by CK1. At Ser329 the chain carries Phosphoserine; by DYRK1A. Phosphothreonine is present on Thr333. Residues 363–459 form a required for interaction with RUNX2 region; that stretch reads SEISNPENME…GGMSQYNCAP (97 aa). An N6-acetyllysine modification is found at Lys423. Positions 462 to 466 match the Required for interaction with SIRT1 motif; that stretch reads LKELL. The segment covering 507–534 has biased composition (polar residues); sequence YGSQASHNKMMNPSSHTHPGHAQQTSAV. Positions 507-537 are disordered; sequence YGSQASHNKMMNPSSHTHPGHAQQTSAVNGR.

Interacts with LRPPRC. Interacts with RUNX2; the interaction inhibits RUNX2 transcriptional activity and mediates the IGF1/insulin-dependent BGLAP expression in osteoblasts Interacts with PPP2R1A; the interaction regulates the dephosphorylation of FOXO1 at Thr-24 and Ser-256 leading to its nuclear import. Interacts (acetylated form) with PPARG. Interacts with XBP1 isoform 2; this interaction is direct and leads to FOXO1 ubiquitination and degradation via the proteasome pathway. Interacts with NLK. Interacts with SIRT1; the interaction results in the deacetylation of FOXO1 leading to activation of FOXO1-mediated transcription of genes involved in DNA repair and stress resistance. Binds to CDK1. Interacts with the 14-3-3 proteins, YWHAG and YWHAZ; the interactions require insulin-stimulated phosphorylation on Thr-24, promote nuclear exit and loss of transcriptional activity. Interacts with SKP2; the interaction ubiquitinates FOXO1 leading to its proteasomal degradation. The interaction requires the presence of KRIT1. Interacts (via the C-terminal half) with ATF4 (via its DNA-binding domain); the interaction occurs in osteoblasts, regulates glucose homeostasis via suppression of beta-cell proliferation and subsequent decrease in insulin production. Interacts with PRMT1; the interaction methylates FOXO1, prevents PKB/AKT1 phosphorylation and retains FOXO1 in the nucleus. Interacts with EP300 and CREBBP; the interactions acetylate FOXO1. Interacts with SIRT2; the interaction is disrupted in response to oxidative stress or serum deprivation, leading to increased level of acetylated FOXO1, which promotes stress-induced autophagy by stimulating E1-like activating enzyme ATG7. Interacts (acetylated form) with ATG7; the interaction is increased in response to oxidative stress or serum deprivation and promotes the autophagic process leading to cell death. Interacts (via the Fork-head domain) with CEBPA; the interaction increases when FOXO1 is deacetylated. Interacts with WDFY2. Forms a complex with WDFY2 and AKT1. Interacts with CRY1. Interacts with PPIA/CYPA; the interaction promotes FOXO1 dephosphorylation, nuclear accumulation and transcriptional activity. Interacts with TOX4; FOXO1 is required for full induction of TOX4-dependent activity and the interaction is inhibited by insulin. Interacts (when phosphorylated on Ser-256) with STUB1/CHIP. Post-translationally, phosphorylation by NLK promotes nuclear export and inhibits the transcriptional activity. In response to growth factors, phosphorylation on Thr-24, Ser-256 and Ser-322 by PKB/AKT1 promotes nuclear export and inactivation of transactivational activity. Phosphorylation on Thr-24 is required for binding 14-3-3 proteins. Phosphorylation of Ser-256 decreases DNA-binding activity and promotes the phosphorylation of Thr-24 and Ser-319, permitting phosphorylation of Ser-322 and Ser-325, probably by CDK1, leading to nuclear exclusion and loss of function. Stress signals, such as response to oxygen or nitric oxide, attenuate the PKB/AKT1-mediated phosphorylation leading to nuclear retention. Phosphorylation of Ser-329 is independent of IGF1 and leads to reduced function. Dephosphorylated on Thr-24 and Ser-256 by PP2A in beta-cells under oxidative stress leading to nuclear retention. Phosphorylation of Ser-249 by CDK1 disrupts binding of 14-3-3 proteins leading to nuclear accumulation and has no effect on DNA-binding nor transcriptional activity. Phosphorylation by STK4/MST1 on Ser-212, upon oxidative stress, inhibits binding to 14-3-3 proteins and nuclear export. PPIA/CYPA promotes its dephosphorylation on Ser-256. In terms of processing, ubiquitinated by SKP2. Ubiquitination leads to proteasomal degradation. Ubiquitinated by STUB1/CHIP; when Ser-256 is phosphorylated. Methylation inhibits AKT1-mediated phosphorylation at Ser-256 and is increased by oxidative stress. Post-translationally, acetylated. Acetylation at Lys-262, Lys-265 and Lys-274 are necessary for autophagic cell death induction. Deacetylated by SIRT2 in response to oxidative stress or serum deprivation, thereby negatively regulating FOXO1-mediated autophagic cell death. Once in the nucleus, acetylated by CREBBP/EP300. Acetylation diminishes the interaction with target DNA and attenuates the transcriptional activity. It increases the phosphorylation at Ser-256. Deacetylation by SIRT1 results in reactivation of the transcriptional activity. Oxidative stress by hydrogen peroxide treatment appears to promote deacetylation and uncoupling of insulin-induced phosphorylation. By contrast, resveratrol acts independently of acetylation. Acetylated at Lys-423, promoting its localization to the nucleus and transcription factor activity. Deacetylation at Lys-423 by SIRT6, promotes its translocation into the cytoplasm, preventing its transcription factor activity. Deacetylation and subsequent inhibition by SIRT6 has different effects depending on cell types: it inhibits gluconeogenesis in hepatocytes, promotes glucose sensing in pancreatic beta-cells and regulates lipid catabolism in brown adipocytes. In terms of tissue distribution, expressed in umbilical endothelial cells (at protein level). Abundantly expressed in skeletal muscle and ovary, with lower expression in the heart, placenta, lung, liver, pancreas, spleen, testis and small intestine. Weakly expressed in the brain, thymus, prostate and mucosal lining of the colon.

It localises to the cytoplasm. Its subcellular location is the nucleus. Its function is as follows. Transcription factor that is the main target of insulin signaling and regulates metabolic homeostasis in response to oxidative stress. Binds to the insulin response element (IRE) with consensus sequence 5'-TT[G/A]TTTTG-3' and the related Daf-16 family binding element (DBE) with consensus sequence 5'-TT[G/A]TTTAC-3'. Activity suppressed by insulin. Main regulator of redox balance and osteoblast numbers and controls bone mass. Orchestrates the endocrine function of the skeleton in regulating glucose metabolism. Also acts as a key regulator of chondrogenic commitment of skeletal progenitor cells in response to lipid availability: when lipids levels are low, translocates to the nucleus and promotes expression of SOX9, which induces chondrogenic commitment and suppresses fatty acid oxidation. Acts synergistically with ATF4 to suppress osteocalcin/BGLAP activity, increasing glucose levels and triggering glucose intolerance and insulin insensitivity. Also suppresses the transcriptional activity of RUNX2, an upstream activator of osteocalcin/BGLAP. Acts as an inhibitor of glucose sensing in pancreatic beta cells by acting as a transcription repressor and suppressing expression of PDX1. In hepatocytes, promotes gluconeogenesis by acting together with PPARGC1A and CEBPA to activate the expression of genes such as IGFBP1, G6PC1 and PCK1. Also promotes gluconeogenesis by directly promoting expression of PPARGC1A and G6PC1. Important regulator of cell death acting downstream of CDK1, PKB/AKT1 and STK4/MST1. Promotes neural cell death. Mediates insulin action on adipose tissue. Regulates the expression of adipogenic genes such as PPARG during preadipocyte differentiation and, adipocyte size and adipose tissue-specific gene expression in response to excessive calorie intake. Regulates the transcriptional activity of GADD45A and repair of nitric oxide-damaged DNA in beta-cells. Required for the autophagic cell death induction in response to starvation or oxidative stress in a transcription-independent manner. Mediates the function of MLIP in cardiomyocytes hypertrophy and cardiac remodeling. Positive regulator of apoptosis in cardiac smooth muscle cells as a result of its transcriptional activation of pro-apoptotic genes. Regulates endothelial cell (EC) viability and apoptosis in a PPIA/CYPA-dependent manner via transcription of CCL2 and BCL2L11 which are involved in EC chemotaxis and apoptosis. This Homo sapiens (Human) protein is Forkhead box protein O1.